Here is a 200-residue protein sequence, read N- to C-terminus: MAKVLVLYYSTYGHVEQMAYAVAEGARETGAEVVVKRVPELVPEEVARQNHFKLDQAAPVATVAELADYDAIIFGTPTRYGNMASQMKQFIDQTGGLWMKGALVGKVGSVFTSTASQHGGQETTLTSFHTVLFHHGMVVVGLPYSFQGQAGVEAVKGNTPYGASTIADGDGSRQPSAVELEGARFQGRHVAGIAAKLARD.

The region spanning 4–190 (VLVLYYSTYG…EGARFQGRHV (187 aa)) is the Flavodoxin-like domain. Residues 10 to 15 (STYGHV) and 78 to 80 (TRY) contribute to the FMN site. NAD(+) is bound at residue Tyr12. Trp98 contacts substrate. Residues 113–119 (STASQHG) and His134 each bind FMN.

The protein belongs to the WrbA family. FMN is required as a cofactor.

The enzyme catalyses a quinone + NADH + H(+) = a quinol + NAD(+). It catalyses the reaction a quinone + NADPH + H(+) = a quinol + NADP(+). In Methylobacterium radiotolerans (strain ATCC 27329 / DSM 1819 / JCM 2831 / NBRC 15690 / NCIMB 10815 / 0-1), this protein is NAD(P)H dehydrogenase (quinone).